The sequence spans 232 residues: PsbP domain-containing protein 2, chloroplastic (232 aa).

A chloroplast-targeting transit peptide spans 1-34; sequence MWSQSFLGSAPKLCLFSSSLPPFSHHKIHKFFCF. Residues 35–71 constitute a thylakoid transit peptide; sequence AQNPSSTVSINLSKRHLNLSILTLFFNGFLLDNKAKS.

This sequence belongs to the PsbP family.

The protein resides in the plastid. Its subcellular location is the chloroplast thylakoid lumen. This Arabidopsis thaliana (Mouse-ear cress) protein is PsbP domain-containing protein 2, chloroplastic (PPD2).